The primary structure comprises 359 residues: Peroxisome assembly protein 12 (359 aa).

Over 1 to 19 the chain is Peroxisomal matrix; it reads MAEHGAHITTASVADDQPS. A helical transmembrane segment spans residues 20–47; sequence IFEVVAQDSLMTAVRPALQHVVKVLAES. Residues 48–51 lie on the Cytoplasmic side of the membrane; sequence NPAH. The helical transmembrane segment at 52–76 threads the bilayer; sequence YGFFWRWFDEIFTLLDFLLQQHYLS. The Peroxisomal matrix portion of the chain corresponds to 77 to 109; sequence RTSASFSEHFYGLKRIVAGSSPQLQRPASAGLP. A helical transmembrane segment spans residues 110 to 139; it reads KEHLWKSAMFLVLLPYLKVKLEKLASTLRE. Residues 140–144 lie on the Cytoplasmic side of the membrane; that stretch reads EDEYS. Residues 145 to 183 traverse the membrane as a helical segment; that stretch reads IHPPSSHWKRFYRVFLAAYPFVTMTWEGWFLTQQLRYIL. The Peroxisomal matrix portion of the chain corresponds to 184-249; sequence GKAEHHSPLL…VGGVALSLST (66 aa). Residues 250–277 traverse the membrane as a helical segment; sequence GLSVGVFFLQFLDWWYSSENQETIKSLT. The Cytoplasmic segment spans residues 278 to 359; the sequence is ALPTPPPPVH…HLIKLYSPEN (82 aa). Cysteine 304, cysteine 307, cysteine 325, and cysteine 328 together coordinate Zn(2+). An RING-type; degenerate zinc finger spans residues 304–343; sequence CPLCRKARVNDTVLATSGYVFCYRCVFNYVRSHQACPITG.

This sequence belongs to the pex2/pex10/pex12 family. As to quaternary structure, component of the PEX2-PEX10-PEX12 retrotranslocation channel, composed of PEX2, PEX10 and PEX12. Interacts with PEX19 via its cytoplasmic domain.

The protein localises to the peroxisome membrane. Its pathway is protein modification; protein ubiquitination. Component of a retrotranslocation channel required for peroxisome organization by mediating export of the PEX5 receptor from peroxisomes to the cytosol, thereby promoting PEX5 recycling. The retrotranslocation channel is composed of PEX2, PEX10 and PEX12; each subunit contributing transmembrane segments that coassemble into an open channel that specifically allows the passage of PEX5 through the peroxisomal membrane. PEX12 also regulates PEX5 recycling by activating the E3 ubiquitin-protein ligase activity of PEX10. When PEX5 recycling is compromised, PEX12 stimulates PEX10-mediated polyubiquitination of PEX5, leading to its subsequent degradation. The protein is Peroxisome assembly protein 12 (Pex12) of Rattus norvegicus (Rat).